The following is a 234-amino-acid chain: Chromatin remodeling protein EBS (234 aa).

Residues 29–144 (KVVRAGDCVL…AATGAFTPDR (116 aa)) form the BAH domain. A PHD-type zinc finger spans residues 146–197 (AVYCKCEMPYNPDDLMVQCEGCKDWYHPACVGMTIEEAKKLDHFVCAECSSD).

It belongs to the SHL1/EBS protein family. In terms of assembly, recognizes di- and trimethylated histone H3 at lysine 4 (H3K4me2 and H3K4me3). Interacts with HDA6. As to expression, expressed ubiquitously, with higher levels in floral buds.

The protein resides in the nucleus. Functionally, chromatin remodeling factor that binds to methylated histone (e.g. H3K4me2/3) to prevent their acetylation (e.g. H3K9K14Ac), likely by recruiting histone deacetylase (HDAC) complexes, and thus regulating the transcription of target genes. Negative regulator in developmental processes in a gibberellic acid- (GA-) dependent manner, such as germination, flowering induction, and flower organ specification, probably by modulating developmental gene expression. Involved in the chromatin-mediated repression of floral initiation and controls genes regulating flowering. Negatively regulates the expression of the floral integrator FT epigenetically, by preventing high levels of H3 acetylation, thus maintaining an inactive chromatin conformation at FT locus. The chain is Chromatin remodeling protein EBS from Arabidopsis thaliana (Mouse-ear cress).